A 1140-amino-acid chain; its full sequence is Eukaryotic translation initiation factor 3 subunit A (1140 aa).

Residues 319–502 form the PCI domain; it reads LQRMAAHVLL…NSIYFGTDLT (184 aa). 3 stretches are compositionally biased toward basic and acidic residues: residues 589–624, 830–900, and 921–984; these read QNNAREEEEARRQEEESRKAKLAEQKRLEQEQEERE, AAEE…RGGD, and ERND…EPDS. Disordered stretches follow at residues 589 to 632 and 830 to 1140; these read QNNA…QNEI and AAEE…VKRR. Low complexity predominate over residues 987–998; the sequence is AAGAKDAGGAPA. Composition is skewed to basic and acidic residues over residues 999 to 1050, 1058 to 1086, and 1109 to 1130; these read SRDD…EPQR, DAPRQSDRDNRRPGGERRDRDGRDVRGDQ, and PRDEKPAAKRDQPQDKENKGGD.

This sequence belongs to the eIF-3 subunit A family. Component of the eukaryotic translation initiation factor 3 (eIF-3) complex. The eIF-3 complex interacts with pix.

Its subcellular location is the cytoplasm. Its function is as follows. RNA-binding component of the eukaryotic translation initiation factor 3 (eIF-3) complex, which is involved in protein synthesis of a specialized repertoire of mRNAs and, together with other initiation factors, stimulates binding of mRNA and methionyl-tRNAi to the 40S ribosome. The eIF-3 complex specifically targets and initiates translation of a subset of mRNAs involved in cell proliferation. The chain is Eukaryotic translation initiation factor 3 subunit A from Drosophila ananassae (Fruit fly).